The primary structure comprises 107 residues: Integration host factor subunit beta (107 aa).

The tract at residues 56-107 is disordered; it reads RPSRVGRNPKSGEKVLVPEKHVPHFKPGKELRERVDRNAGEPLKADAADDDL. A compositionally biased stretch (basic and acidic residues) spans 65-107; that stretch reads KSGEKVLVPEKHVPHFKPGKELRERVDRNAGEPLKADAADDDL.

It belongs to the bacterial histone-like protein family. Heterodimer of an alpha and a beta chain.

This protein is one of the two subunits of integration host factor, a specific DNA-binding protein that functions in genetic recombination as well as in transcriptional and translational control. In Paraburkholderia phymatum (strain DSM 17167 / CIP 108236 / LMG 21445 / STM815) (Burkholderia phymatum), this protein is Integration host factor subunit beta.